Here is a 624-residue protein sequence, read N- to C-terminus: Serine/threonine-protein kinase ppk35 (624 aa).

The region spanning Phe-162–Phe-465 is the Protein kinase domain. ATP-binding positions include Leu-168–Val-176 and Lys-191. Asp-285 (proton acceptor) is an active-site residue. The region spanning Lys-466–Leu-548 is the AGC-kinase C-terminal domain. The segment covering Arg-545–Arg-559 has biased composition (basic residues). A disordered region spans residues Arg-545–Lys-617. The segment covering Lys-560–Asp-574 has biased composition (basic and acidic residues). Residues Ser-596–His-609 show a composition bias toward basic residues.

Belongs to the protein kinase superfamily. Ser/Thr protein kinase family.

Its subcellular location is the cytoplasm. The protein localises to the nucleus. It is found in the nucleolus. The catalysed reaction is L-seryl-[protein] + ATP = O-phospho-L-seryl-[protein] + ADP + H(+). It carries out the reaction L-threonyl-[protein] + ATP = O-phospho-L-threonyl-[protein] + ADP + H(+). Functionally, has a role in meiosis. This Schizosaccharomyces pombe (strain 972 / ATCC 24843) (Fission yeast) protein is Serine/threonine-protein kinase ppk35 (ppk35).